The primary structure comprises 330 residues: MPGPATDAGKIPFCDAKEEIRAGLESSEGGGGPERPGARGQRQNIVWRNVVLMSLLHLGAVYSLVLIPKAKPLTLLWAYFCFLLAALGVTAGAHRLWSHRSYRAKLPLRIFLAVANSMAFQNDIFEWSRDHRAHHKYSETDADPHNARRGFFFSHIGWLFVRKHRDVIEKGRKLDVTDLLADPVVRIQRKYYKISVVLMCFVVPTLVPWYIWGESLWNSYFLASILRYTISLNISWLVNSAAHMYGNRPYDKHISPRQNPLVALGAIGEGFHNYHHTFPFDYSASEFGLNFNPTTWFIDFMCWLGLATDRKRATKPMIEARKARTGDSSA.

Residues 1 to 49 (MPGPATDAGKIPFCDAKEEIRAGLESSEGGGGPERPGARGQRQNIVWRN) lie on the Cytoplasmic side of the membrane. Asn49 is a substrate binding site. A helical membrane pass occupies residues 50 to 70 (VVLMSLLHLGAVYSLVLIPKA). At 71-72 (KP) the chain is on the lumenal side. Residues 73–93 (LTLLWAYFCFLLAALGVTAGA) traverse the membrane as a helical segment. Fe cation contacts are provided by His94 and His99. The Histidine box-1 motif lies at 94-99 (HRLWSH). The Cytoplasmic segment spans residues 94-193 (HRLWSHRSYR…VVRIQRKYYK (100 aa)). Asn122, Arg129, and Asp130 together coordinate substrate. The Fe cation site is built by His131, His134, and His135. The Histidine box-2 motif lies at 131 to 135 (HRAHH). Positions 162 and 163 each coordinate substrate. A helical membrane pass occupies residues 194–214 (ISVVLMCFVVPTLVPWYIWGE). Position 215 (Ser215) is a topological domain, lumenal. The helical transmembrane segment at 216–238 (LWNSYFLASILRYTISLNISWLV) threads the bilayer. Trp236 provides a ligand contact to substrate. At 239–330 (NSAAHMYGNR…RKARTGDSSA (92 aa)) the chain is on the cytoplasmic side. Fe cation is bound by residues His243, His272, His275, and His276. The Histidine box-3 motif lies at 272 to 276 (HNYHH).

It belongs to the fatty acid desaturase type 1 family. As to quaternary structure, may self-associate and form homodimers. Fe(2+) serves as cofactor. Detected in fetal brain, and at lower levels in fetal kidney. Detected in adult brain and pancreas, and at lower levels in kidney and lung. Expressed in spiral ganglion cells and the organ of Corti of fetal cochlea.

The protein resides in the endoplasmic reticulum membrane. The catalysed reaction is octadecanoyl-CoA + 2 Fe(II)-[cytochrome b5] + O2 + 2 H(+) = (9Z)-octadecenoyl-CoA + 2 Fe(III)-[cytochrome b5] + 2 H2O. The enzyme catalyses hexadecanoyl-CoA + 2 Fe(II)-[cytochrome b5] + O2 + 2 H(+) = (9Z)-hexadecenoyl-CoA + 2 Fe(III)-[cytochrome b5] + 2 H2O. In terms of biological role, stearoyl-CoA desaturase that utilizes O(2) and electrons from reduced cytochrome b5 to introduce the first double bond into saturated fatty acyl-CoA substrates. Catalyzes the insertion of a cis double bond at the delta-9 position into fatty acyl-CoA substrates including palmitoyl-CoA and stearoyl-CoA. Gives rise to a mixture of 16:1 and 18:1 unsaturated fatty acids. Involved in neuronal cell proliferation and differentiation through down-regulation of EGFR/AKT/MAPK and Wnt signaling pathways. The sequence is that of Stearoyl-CoA desaturase 5 (SCD5) from Homo sapiens (Human).